Consider the following 179-residue polypeptide: Large ribosomal subunit protein uL5 (179 aa).

Belongs to the universal ribosomal protein uL5 family. Part of the 50S ribosomal subunit; part of the 5S rRNA/L5/L18/L25 subcomplex. Contacts the 5S rRNA and the P site tRNA. Forms a bridge to the 30S subunit in the 70S ribosome.

Functionally, this is one of the proteins that bind and probably mediate the attachment of the 5S RNA into the large ribosomal subunit, where it forms part of the central protuberance. In the 70S ribosome it contacts protein S13 of the 30S subunit (bridge B1b), connecting the 2 subunits; this bridge is implicated in subunit movement. Contacts the P site tRNA; the 5S rRNA and some of its associated proteins might help stabilize positioning of ribosome-bound tRNAs. The polypeptide is Large ribosomal subunit protein uL5 (Sodalis glossinidius (strain morsitans)).